A 505-amino-acid polypeptide reads, in one-letter code: Cyanidin 3-O-glucoside 7-O-glucosyltransferase (acyl-glucose) (505 aa).

Positions 1-25 are cleaved as a signal peptide; the sequence is MCPSFLVTLLLLQLSSLVVVLVVWA. A beta-D-glucoside contacts are provided by residues Gln52, His152, and 197–198; that span reads NE. Glu198 (proton donor) is an active-site residue. Cys217 and Cys225 are joined by a disulfide. N-linked (GlcNAc...) asparagine glycosylation is found at Asn224, Asn229, and Asn324. Positions 341 and 403 each coordinate a beta-D-glucoside. The active-site Nucleophile is the Glu403. 2 N-linked (GlcNAc...) asparagine glycosylation sites follow: Asn411 and Asn437. A beta-D-glucoside is bound by residues Trp447 and Tyr463. The N-linked (GlcNAc...) asparagine glycan is linked to Asn494.

This sequence belongs to the glycosyl hydrolase 1 family.

It localises to the vacuole. The enzyme catalyses 1-O-(4-hydroxy-3-methoxybenzoyl)-beta-D-glucose + cyanidin 3-O-beta-D-glucoside = cyanidin 3,7-di-O-beta-D-glucoside + vanillate. Its pathway is pigment biosynthesis; anthocyanin biosynthesis. Its function is as follows. Beta-glycosidase that catalyzes the transfer of glucose moiety to anthocyanidin 3-glucoside at the 7 position. Anthocyanins are ubiquitous colored pigments that are responsible for variations in petal color. The polypeptide is Cyanidin 3-O-glucoside 7-O-glucosyltransferase (acyl-glucose) (AA7GT) (Delphinium grandiflorum (Siberian larkspur)).